The chain runs to 839 residues: Taste receptor type 1 member 2 (839 aa).

Residues 1 to 19 form the signal peptide; sequence MGTRATTICSLFFLLWVLA. Topologically, residues 20 to 566 are extracellular; the sequence is EPAENSDFYL…VFLEWHEAPT (547 aa). 9 N-linked (GlcNAc...) asparagine glycosylation sites follow: N84, N248, N292, N312, N368, N407, N428, N487, and N527. Residues 567 to 587 traverse the membrane as a helical segment; the sequence is IAVALLAALGFLSTLAILVIF. The Cytoplasmic segment spans residues 588-602; it reads WRHFQTPIVRSAGGP. Residues 603–623 traverse the membrane as a helical segment; sequence MCFLMLTLLLVAYMVVPVYVG. Residues 624–635 are Extracellular-facing; sequence PPKVSTCLCRQA. A helical transmembrane segment spans residues 636 to 656; the sequence is LFPLCFTICISCIAVRSFQIV. The Cytoplasmic segment spans residues 657–681; it reads CAFKMASRFPRAYSYWVRYQGPYVS. The helical transmembrane segment at 682-702 threads the bilayer; it reads MAFITVLKMVIVVIGMLATGL. At 703–727 the chain is on the extracellular side; sequence SPTTRTDPDDPKITIVSCNPNYRNS. A helical transmembrane segment spans residues 728–748; that stretch reads LLFNTSLDLLLSVVGFSFAYM. Topologically, residues 749-760 are cytoplasmic; it reads GKELPTNYNEAK. Residues 761 to 781 form a helical membrane-spanning segment; it reads FITLSMTFYFTSSVSLCTFMS. Topologically, residues 782-784 are extracellular; that stretch reads AYS. Residues 785–805 form a helical membrane-spanning segment; the sequence is GVLVTIVDLLVTVLNLLAISL. At 806-839 the chain is on the cytoplasmic side; that stretch reads GYFGPKCYMILFYPERNTPAYFNSMIQGYTMRRD.

This sequence belongs to the G-protein coupled receptor 3 family. TAS1R subfamily. Forms heterodimers with TAS1R3.

The protein localises to the cell membrane. In terms of biological role, putative taste receptor. TAS1R2/TAS1R3 recognizes diverse natural and synthetic sweeteners. In Gorilla gorilla gorilla (Western lowland gorilla), this protein is Taste receptor type 1 member 2 (TAS1R2).